A 99-amino-acid chain; its full sequence is Aspartyl/glutamyl-tRNA(Asn/Gln) amidotransferase subunit C (99 aa).

It belongs to the GatC family. As to quaternary structure, heterotrimer of A, B and C subunits.

The catalysed reaction is L-glutamyl-tRNA(Gln) + L-glutamine + ATP + H2O = L-glutaminyl-tRNA(Gln) + L-glutamate + ADP + phosphate + H(+). It catalyses the reaction L-aspartyl-tRNA(Asn) + L-glutamine + ATP + H2O = L-asparaginyl-tRNA(Asn) + L-glutamate + ADP + phosphate + 2 H(+). In terms of biological role, allows the formation of correctly charged Asn-tRNA(Asn) or Gln-tRNA(Gln) through the transamidation of misacylated Asp-tRNA(Asn) or Glu-tRNA(Gln) in organisms which lack either or both of asparaginyl-tRNA or glutaminyl-tRNA synthetases. The reaction takes place in the presence of glutamine and ATP through an activated phospho-Asp-tRNA(Asn) or phospho-Glu-tRNA(Gln). The chain is Aspartyl/glutamyl-tRNA(Asn/Gln) amidotransferase subunit C from Paraburkholderia phymatum (strain DSM 17167 / CIP 108236 / LMG 21445 / STM815) (Burkholderia phymatum).